The following is a 210-amino-acid chain: Somatotropin (210 aa).

Positions 1-22 are cleaved as a signal peptide; the sequence is MGQVFLLMPVLLVSCFLSQGAA. H38 contributes to the Zn(2+) binding site. C71 and C183 are oxidised to a cystine. E192 serves as a coordination point for Zn(2+). A disulfide bond links C200 and C208.

The protein belongs to the somatotropin/prolactin family.

It localises to the secreted. Functionally, growth hormone plays an important role in growth control and is involved in the regulation of several anabolic processes. Implicated as an osmoregulatory substance important for seawater adaptation. The polypeptide is Somatotropin (gh) (Oncorhynchus tshawytscha (Chinook salmon)).